We begin with the raw amino-acid sequence, 458 residues long: Protochlorophyllide reductase, chloroplastic (458 aa).

The protein belongs to the short-chain dehydrogenases/reductases (SDR) family. POR subfamily.

It is found in the plastid. The protein localises to the chloroplast. The enzyme catalyses chlorophyllide a + NADP(+) = protochlorophyllide a + NADPH + H(+). It participates in porphyrin-containing compound metabolism; chlorophyll biosynthesis. Phototransformation of protochlorophyllide (Pchlide) to chlorophyllide (Chlide). This chain is Protochlorophyllide reductase, chloroplastic (PORA), found in Marchantia paleacea (Liverwort).